A 447-amino-acid chain; its full sequence is Serine/threonine-protein kinase NLK2 (447 aa).

The region spanning 60–349 (PEPDRPIGYG…AKDALAHPYL (290 aa)) is the Protein kinase domain. ATP is bound by residues 66 to 74 (IGYGAFGVV) and Lys-89. The active-site Proton acceptor is the Asp-186.

Belongs to the protein kinase superfamily. CMGC Ser/Thr protein kinase family. MAP kinase subfamily. In terms of assembly, interacts with sox11, hmgxb4/hmg2l1, rnf138/narf, stat3.1 and mef2a. Mg(2+) serves as cofactor. In terms of tissue distribution, expressed widely in the ectoderm during early gastrula stage when neural induction is taking place. Expressed in the head region of neurula stage embryos. At the end of neurulation, expression becomes localized to the nervous system, and is restricted to the central nervous system, eye and head neural crest cells by the early tadpole stages.

It is found in the nucleus. The protein resides in the cytoplasm. The catalysed reaction is L-seryl-[protein] + ATP = O-phospho-L-seryl-[protein] + ADP + H(+). It catalyses the reaction L-threonyl-[protein] + ATP = O-phospho-L-threonyl-[protein] + ADP + H(+). Activated by tyrosine and threonine phosphorylation. Its function is as follows. Negatively regulates Wnt/beta-catenin-signaling during development. Plays a role together with sox11 in neural induction during early embryogenesis. Involved in TGFbeta-mediated mesoderm induction in early embryos, acting downstream of map3k7/tak1 to phosphorylate stat3.1. Augments the rnf138/narf-directed ubiquitination and degradation of tcf/lef by enhancing the association of rnf138/narf and tcf/lef. Phosphorylates mef2a to play a role in anterior neural development, including eye formation. The sequence is that of Serine/threonine-protein kinase NLK2 (nlk.2) from Xenopus laevis (African clawed frog).